The primary structure comprises 395 residues: ASTRA-associated protein 1 (395 aa).

3 WD repeats span residues 7-48 (AHVS…PIAS), 221-260 (HYPE…LPVV), and 343-386 (INPG…TGYN).

Belongs to the WD repeat ASA1 family. In terms of assembly, component of the ASTRA chromatin remodeling machinery complex.

Its subcellular location is the nucleus. Functionally, component of the ASTRA complex involved in chromatin remodeling. The sequence is that of ASTRA-associated protein 1 (ASA1) from Eremothecium gossypii (strain ATCC 10895 / CBS 109.51 / FGSC 9923 / NRRL Y-1056) (Yeast).